The sequence spans 689 residues: Elongation factor G (689 aa).

In terms of domain architecture, tr-type G spans 8-282; sequence ERTRNIGIMA…GVVAYMPSPL (275 aa). GTP contacts are provided by residues 17–24, 81–85, and 135–138; these read AHIDAGKT, DTPGH, and NKMD.

It belongs to the TRAFAC class translation factor GTPase superfamily. Classic translation factor GTPase family. EF-G/EF-2 subfamily.

The protein localises to the cytoplasm. Its function is as follows. Catalyzes the GTP-dependent ribosomal translocation step during translation elongation. During this step, the ribosome changes from the pre-translocational (PRE) to the post-translocational (POST) state as the newly formed A-site-bound peptidyl-tRNA and P-site-bound deacylated tRNA move to the P and E sites, respectively. Catalyzes the coordinated movement of the two tRNA molecules, the mRNA and conformational changes in the ribosome. The polypeptide is Elongation factor G (Alkaliphilus metalliredigens (strain QYMF)).